The chain runs to 198 residues: Large ribosomal subunit protein bL9 (198 aa).

This sequence belongs to the bacterial ribosomal protein bL9 family.

Its function is as follows. Binds to the 23S rRNA. The polypeptide is Large ribosomal subunit protein bL9 (Bartonella tribocorum (strain CIP 105476 / IBS 506)).